The chain runs to 311 residues: MLKIVANTADLIGDTPLVRLNRLQPENAAQVYLKLEFFNPSGSVKDRAAYQMIIEAEQNGLLKPGSVIIEPTSGNTGIGLAMNAAARGYKAILVMPDTMTKERINLLKAYGAEVVLTPGEERMPGSIKKAKELAEQIPNSYIPMQFDNTANPDAHRKTTAPEIARAIEEIGKPLGAFVASSGTGGTITGTGEALKELFPDITVHVVEPAGSPVLSGGKPGAHKLVGTSPGFIPPILNEDVYDEIIKISDEDAYTTTRRLAAEEGILVGPSSGAACFAAIETAKRLSPDKVVVCMTADTGERYLSTDLWSFI.

Residue Lys45 is modified to N6-(pyridoxal phosphate)lysine. Pyridoxal 5'-phosphate is bound by residues Asn75, 182–186 (GTGGT), and Ser270.

The protein belongs to the cysteine synthase/cystathionine beta-synthase family. It depends on pyridoxal 5'-phosphate as a cofactor.

The catalysed reaction is O-acetyl-L-serine + hydrogen sulfide = L-cysteine + acetate. The protein operates within amino-acid biosynthesis; L-cysteine biosynthesis; L-cysteine from L-serine: step 2/2. The protein is Probable cysteine synthase (ytkP) of Bacillus subtilis (strain 168).